Consider the following 262-residue polypeptide: Apolipoprotein A-I-2 (262 aa).

The N-terminal stretch at 1 to 18 (MQFLALALTILLAAATQA) is a signal peptide. The interval 32–63 (VKVAMMEYMAQVKETAQRSIDHLDDTEYKEYK) is 3 X approximate tandem repeats. 2 tandem repeats follow at residues 64 to 85 (VQLSQSLDNLQQYAQTASESLA) and 87 to 107 (YSEAIGVQLTEATAAVRAEVM). A 10 X approximate tandem repeats region spans residues 64–262 (VQLSQSLDNL…YETISQAMKA (199 aa)). Residues 108 to 118 (KDVEELRSQLE) form a 3; half-length repeat. Repeat copies occupy residues 119 to 140 (PKRAELKEVLDKHIDEYRKRLE), 141 to 162 (PLIKDIVEQRRTELEAFRVKIE), 163 to 184 (PVVEEMRAKVSANVEETKAKLM), 185 to 206 (PIVETVRAKLTERLEELRTLAS), and 207 to 228 (PYAEEYKEQMVKAVGEVREKVV). The stretch at 229–239 (PLTTDFKGQLG) is one 9; half-length repeat. Copy 10 of the repeat occupies 240–262 (PAAEQAKEKLMALYETISQAMKA).

Belongs to the apolipoprotein A1/A4/E family.

Its subcellular location is the secreted. Participates in the reverse transport of cholesterol from tissues to the liver for excretion by promoting cholesterol efflux from tissues and by acting as a cofactor for the lecithin cholesterol acyltransferase (LCAT). This chain is Apolipoprotein A-I-2, found in Oncorhynchus mykiss (Rainbow trout).